The sequence spans 205 residues: Probable GTP-binding protein EngB (205 aa).

The EngB-type G domain occupies 29 to 203; the sequence is QGAEIAFIGR…KAVLSQWFRS (175 aa). Residues 37-44, 64-68, 82-85, 149-152, and 182-184 each bind GTP; these read GRSNAGKS, GRTQM, DLPG, TKSD, and FSS. 2 residues coordinate Mg(2+): serine 44 and threonine 66.

This sequence belongs to the TRAFAC class TrmE-Era-EngA-EngB-Septin-like GTPase superfamily. EngB GTPase family. The cofactor is Mg(2+).

Its function is as follows. Necessary for normal cell division and for the maintenance of normal septation. In Coxiella burnetii (strain RSA 331 / Henzerling II), this protein is Probable GTP-binding protein EngB.